The chain runs to 546 residues: uncharacterized protein (546 aa).

The region spanning 52–123 (SVAELRDVQP…NTIEQLLQEN (72 aa)) is the SLH domain.

The protein belongs to the OprB family.

This is an uncharacterized protein from Synechocystis sp. (strain ATCC 27184 / PCC 6803 / Kazusa).